A 372-amino-acid polypeptide reads, in one-letter code: Solute carrier family 35 member F6 (372 aa).

Positions 1–18 are cleaved as a signal peptide; sequence MAWTKYQLFLAGLMLVTG. 2 consecutive transmembrane segments (helical) span residues 48 to 68 and 89 to 109; these read FVQA…FYLL and LLFL…YVAL. The 56-residue stretch at 105–160 folds into the EamA domain; sequence MYVALNMTSASSFQMLRGAVIIFTGLFSVAFLDRRLAPSQWLGILITIAGLVVVGL. A glycan (N-linked (GlcNAc...) asparagine) is linked at N110. 7 consecutive transmembrane segments (helical) span residues 116–136, 145–165, 176–196, 211–231, 261–281, 293–312, and 320–336; these read SFQM…VAFL, WLGI…DLLS, VITG…QMVL, AVGI…VPMF, LIAL…FSGI, MVLD…ALGW, and ILGF…YNGL. T366 carries the post-translational modification Phosphothreonine.

The protein belongs to the SLC35F solute transporter family. As to quaternary structure, interacts with SLC25A5.

Its subcellular location is the mitochondrion. The protein localises to the lysosome membrane. Involved in the maintenance of mitochondrial membrane potential in pancreatic ductal adenocarcinoma (PDAC) cells. Promotes pancreatic ductal adenocarcinoma (PDAC) cell growth. May play a role as a nucleotide-sugar transporter. In Mus musculus (Mouse), this protein is Solute carrier family 35 member F6 (Slc35f6).